The following is a 1266-amino-acid chain: SUMO-interacting motif-containing protein 1 (1266 aa).

The tract at residues Met1–Pro35 is disordered. Basic residues predominate over residues Gly22–Leu31. Positions Phe45–Thr49 match the SUMO interaction motif 1 (SIM); mediates the binding to polysumoylated substrates motif. An SUMO interaction motif 2 (SIM); mediates the binding to polysumoylated substrates motif is present at residues Val64–Thr68. Composition is skewed to low complexity over residues Ser183–Asn197 and Ser532–Ser553. Disordered regions lie at residues Ser183–Gln206, Ser532–Val732, Asn756–Ala812, and Leu1024–Asn1052. Over residues Ser560–Val571 the composition is skewed to polar residues. Over residues Ser764–Ser777 the composition is skewed to low complexity. Residues Gln779 to Arg1266 form an interaction with SLF2 region. Residues Ser857–Arg1266 are required for inhibition of CAPN3 protease activity. Residues Ile865–Arg1200 are NSE5-like domain.

As to quaternary structure, forms a heterodimer with SLF2. Interacts (via SIM domains) with SUMO1 and SUMO2. Interacts with CAPN3 and CTBP1. Interacts with SMC6 and ZNF451.

Its subcellular location is the nucleus. It is found in the PML body. Its function is as follows. Inhibits the protease activity of CAPN3. May play a role in SMC5-SMC6 complex recruitment for viral restriction. Forms a complex with SLF2 and this complex is required to recruit SMC5-SMC6 complex to PML nuclear bodies and sites of viral replication. The polypeptide is SUMO-interacting motif-containing protein 1 (Simc1) (Rattus norvegicus (Rat)).